The sequence spans 144 residues: Large ribosomal subunit protein uL13 (144 aa).

The protein belongs to the universal ribosomal protein uL13 family. Part of the 50S ribosomal subunit.

This protein is one of the early assembly proteins of the 50S ribosomal subunit, although it is not seen to bind rRNA by itself. It is important during the early stages of 50S assembly. The sequence is that of Large ribosomal subunit protein uL13 from Buchnera aphidicola subsp. Baizongia pistaciae (strain Bp).